A 237-amino-acid polypeptide reads, in one-letter code: Uridylate kinase (237 aa).

Lysine 10–glycine 13 contacts ATP. Residue glycine 52 participates in UMP binding. Positions 53 and 57 each coordinate ATP. Residues aspartate 72 and threonine 133–threonine 140 contribute to the UMP site. 3 residues coordinate ATP: threonine 160, tyrosine 166, and aspartate 169.

This sequence belongs to the UMP kinase family. In terms of assembly, homohexamer.

It localises to the cytoplasm. The catalysed reaction is UMP + ATP = UDP + ADP. It functions in the pathway pyrimidine metabolism; CTP biosynthesis via de novo pathway; UDP from UMP (UMPK route): step 1/1. Its activity is regulated as follows. Inhibited by UTP. Functionally, catalyzes the reversible phosphorylation of UMP to UDP. The chain is Uridylate kinase from Thiobacillus denitrificans (strain ATCC 25259 / T1).